The chain runs to 130 residues: Sulfurtransferase TusD (130 aa).

Cys-80 (cysteine persulfide intermediate) is an active-site residue.

It belongs to the DsrE/TusD family. As to quaternary structure, heterohexamer, formed by a dimer of trimers. The hexameric TusBCD complex contains 2 copies each of TusB, TusC and TusD. The TusBCD complex interacts with TusE.

It is found in the cytoplasm. Its function is as follows. Part of a sulfur-relay system required for 2-thiolation of 5-methylaminomethyl-2-thiouridine (mnm(5)s(2)U) at tRNA wobble positions. Accepts sulfur from TusA and transfers it in turn to TusE. This chain is Sulfurtransferase TusD, found in Sodalis glossinidius (strain morsitans).